Reading from the N-terminus, the 848-residue chain is Nuclear cap-binding protein subunit 1 (848 aa).

The region spanning 8–228 is the MIF4G domain; sequence LLRIGEKGPE…DLLDRIQSLA (221 aa). Positions 767–786 are disordered; it reads EDDKPSAMDVDSENGNPKKS.

It belongs to the NCBP1 family. Component of the nuclear cap-binding complex (CBC), a heterodimer composed of ABH1/CBP80 and CBP20 that interacts with m7GpppG-capped RNA. As to expression, expressed in all tissues analyzed, including roots, stems, leaves and flowers.

It localises to the nucleus. The protein resides in the cytoplasm. In terms of biological role, component of the cap-binding complex (CBC), which binds cotranscriptionally to the 5'-cap of pre-mRNAs and is involved in various processes such as pre-mRNA splicing and RNA-mediated gene silencing (RNAi) by microRNAs (miRNAs). The CBC complex is involved in miRNA-mediated RNA interference and is required for primary miRNA processing. In the CBC complex, ABH1/CBP80 does not bind directly capped RNAs (m7GpppG-capped RNA) but is required to stabilize the movement of the N-terminal loop of CBP20 and lock the CBC into a high affinity cap-binding state with the cap structure. Involved in flowering regulation, possibly by regulating pre-mRNA splicing of FLC gene. Acts as a negative regulator of abscisic acid signaling in guard cells. This chain is Nuclear cap-binding protein subunit 1 (ABH1), found in Arabidopsis thaliana (Mouse-ear cress).